Consider the following 406-residue polypeptide: Zinc finger CCCH domain-containing protein 15 homolog (406 aa).

Low complexity predominate over residues 1–11; sequence MPPKKAPAGPS. Positions 1–70 are disordered; sequence MPPKKAPAGP…DKKKDEKEKK (70 aa). Basic and acidic residues predominate over residues 12–28; it reads KKTEQKKKEKVIEDKTF. Over residues 38-50 the composition is skewed to low complexity; that stretch reads QQKFIQQVQKQVQ. Residues 56–70 show a composition bias toward basic and acidic residues; it reads PRQDGDKKKDEKEKK. The stretch at 57–82 forms a coiled coil; that stretch reads RQDGDKKKDEKEKKLADLREMASIFK. C3H1-type zinc fingers lie at residues 94–121 and 166–203; these read DPKS…HDLS and PTTE…HALP. Residues 336–382 are disordered; it reads VDGSGTIASSTRLLDQATEAAKTAAAEDGAASDDENPSSSAPANDAA. 2 stretches are compositionally biased toward low complexity: residues 352–364 and 372–382; these read ATEA…AEDG and PSSSAPANDAA.

It belongs to the ZC3H15/TMA46 family.

In Drosophila pseudoobscura pseudoobscura (Fruit fly), this protein is Zinc finger CCCH domain-containing protein 15 homolog.